Reading from the N-terminus, the 458-residue chain is Exodeoxyribonuclease 7 large subunit (458 aa).

This sequence belongs to the XseA family. As to quaternary structure, heterooligomer composed of large and small subunits.

It is found in the cytoplasm. It carries out the reaction Exonucleolytic cleavage in either 5'- to 3'- or 3'- to 5'-direction to yield nucleoside 5'-phosphates.. Functionally, bidirectionally degrades single-stranded DNA into large acid-insoluble oligonucleotides, which are then degraded further into small acid-soluble oligonucleotides. The chain is Exodeoxyribonuclease 7 large subunit from Escherichia coli O6:H1 (strain CFT073 / ATCC 700928 / UPEC).